Reading from the N-terminus, the 329-residue chain is D-alanine--D-alanine ligase (329 aa).

The region spanning 121-327 is the ATP-grasp domain; the sequence is KLWYDALDIP…FSEFLAQCVT (207 aa). 151–206 provides a ligand contact to ATP; the sequence is AFGHWGSIFVKAARQGSSVGCYKVTTEDQIAPAIEAAFGFSEQVLVEQAVKPRELE. Mg(2+) contacts are provided by D281, E294, and N296.

It belongs to the D-alanine--D-alanine ligase family. Requires Mg(2+) as cofactor. Mn(2+) serves as cofactor.

The protein localises to the cytoplasm. The catalysed reaction is 2 D-alanine + ATP = D-alanyl-D-alanine + ADP + phosphate + H(+). Its pathway is cell wall biogenesis; peptidoglycan biosynthesis. Its function is as follows. Cell wall formation. The protein is D-alanine--D-alanine ligase of Vibrio cholerae serotype O1 (strain ATCC 39541 / Classical Ogawa 395 / O395).